A 295-amino-acid polypeptide reads, in one-letter code: Polyadenylate-binding protein 2-B (295 aa).

Positions 1 to 102 are disordered; that stretch reads MAAVSSVASL…EEPGELTGDQ (102 aa). Composition is skewed to gly residues over residues 19–31 and 71–81; these read LRGG…GGQD and GRGGSGGGAGG. The span at 83 to 96 shows a compositional bias: acidic residues; sequence EELEDEELEEEEPG. Positions 106–140 form a coiled coil; it reads DPELEAIKARVREMEEEAEKLKELQNEVEKQMNMS. Positions 145 to 295 are necessary for homooligomerization; the sequence is NAGPVIMSVE…ARATSWYTPY (151 aa). One can recognise an RRM domain in the interval 162-239; it reads RSIYVGNVDY…RQIKVVPKRT (78 aa).

Monomer and homooligomer. Binds RNA as a monomer and oligomerizes when bound to poly(A).

It localises to the nucleus. The protein localises to the cytoplasm. Involved in the 3'-end formation of mRNA precursors (pre-mRNA) by the addition of a poly(A) tail of 200-250 nt to the upstream cleavage product. Stimulates poly(A) polymerase (PAPOLA) conferring processivity on the poly(A) tail elongation reaction and also controls the poly(A) tail length. Increases the affinity of poly(A) polymerase for RNA. Binds to poly(A) and to poly(G) with high affinity. May protect the poly(A) tail from degradation. The protein is Polyadenylate-binding protein 2-B (pabpn1-b) of Xenopus laevis (African clawed frog).